A 283-amino-acid polypeptide reads, in one-letter code: Eukaryotic translation initiation factor 3 subunit K (283 aa).

A PCI domain is found at 52–263; sequence YDLLANLAIL…EIKATVIREE (212 aa). Residues 114 to 135 are disordered; it reads EATTTDADNAGSLSGDDDDDEV.

The protein belongs to the eIF-3 subunit K family. As to quaternary structure, component of the eukaryotic translation initiation factor 3 (eIF-3) complex.

It localises to the cytoplasm. Functionally, component of the eukaryotic translation initiation factor 3 (eIF-3) complex, which is involved in protein synthesis of a specialized repertoire of mRNAs and, together with other initiation factors, stimulates binding of mRNA and methionyl-tRNAi to the 40S ribosome. The eIF-3 complex specifically targets and initiates translation of a subset of mRNAs involved in cell proliferation. This is Eukaryotic translation initiation factor 3 subunit K from Mycosarcoma maydis (Corn smut fungus).